The sequence spans 534 residues: Phosphoenolpyruvate carboxykinase (ATP) (534 aa).

Positions 60, 195, and 201 each coordinate substrate. Residues Lys-201, His-221, and 237 to 245 (GLSGTGKTT) each bind ATP. Lys-201 and His-221 together coordinate Mn(2+). Asp-258 contacts Mn(2+). ATP is bound by residues Glu-287, Arg-324, and Thr-449. Arg-324 is a binding site for substrate.

Belongs to the phosphoenolpyruvate carboxykinase (ATP) family. The cofactor is Mn(2+).

The protein resides in the cytoplasm. It catalyses the reaction oxaloacetate + ATP = phosphoenolpyruvate + ADP + CO2. The protein operates within carbohydrate biosynthesis; gluconeogenesis. Functionally, involved in the gluconeogenesis. Catalyzes the conversion of oxaloacetate (OAA) to phosphoenolpyruvate (PEP) through direct phosphoryl transfer between the nucleoside triphosphate and OAA. The sequence is that of Phosphoenolpyruvate carboxykinase (ATP) from Flavobacterium johnsoniae (strain ATCC 17061 / DSM 2064 / JCM 8514 / BCRC 14874 / CCUG 350202 / NBRC 14942 / NCIMB 11054 / UW101) (Cytophaga johnsonae).